A 232-amino-acid chain; its full sequence is MERCPSLGVTLYALVVVLGLRATPAGGQHYLHIRPAPSDNLPLVDLIEHPDPIFDPKEKDLNETLLRSLLGGHYDPGFMATSPPEDRPGGGGGAAGGAEDLAELDQLLRQRPSGAMPSEIKGLEFSEGLAQGKKQRLSKKLRRKLQMWLWSQTFCPVLYAWNDLGSRFWPRYVKVGSCFSKRSCSVPEGMVCKPSKSVHLTVLRWRCQRRGGQRCGWIPIQYPIISECKCSC.

Residues 1 to 27 (MERCPSLGVTLYALVVVLGLRATPAGG) form the signal peptide. An N-linked (GlcNAc...) asparagine glycan is attached at Asn-62. Residues 77 to 96 (GFMATSPPEDRPGGGGGAAG) are disordered. 4 disulfides stabilise this stretch: Cys-155/Cys-192, Cys-178/Cys-228, Cys-184/Cys-230, and Cys-207/Cys-215.

Belongs to the noggin family. In terms of assembly, homodimer. Interacts with GDF5; inhibits chondrocyte differentiation.

The protein resides in the secreted. Functionally, inhibitor of bone morphogenetic proteins (BMP) signaling which is required for growth and patterning of the neural tube and somite. Essential for cartilage morphogenesis and joint formation. Inhibits chondrocyte differentiation through its interaction with GDF5 and, probably, GDF6. The chain is Noggin (NOG) from Homo sapiens (Human).